The chain runs to 127 residues: Small ribosomal subunit protein eS8 (127 aa).

The disordered stretch occupies residues 1–33 (MAIWQGKSMKKPSGGRAKMNRGKRKYELGREPA).

The protein belongs to the eukaryotic ribosomal protein eS8 family. As to quaternary structure, part of the 30S ribosomal subunit.

This chain is Small ribosomal subunit protein eS8 (rps8e), found in Methanothermobacter thermautotrophicus (strain ATCC 29096 / DSM 1053 / JCM 10044 / NBRC 100330 / Delta H) (Methanobacterium thermoautotrophicum).